An 85-amino-acid chain; its full sequence is Large ribosomal subunit protein bL27 (85 aa).

Residues 1 to 22 are disordered; the sequence is MAHKKAGGSSRNGRDSHSKRLG.

This sequence belongs to the bacterial ribosomal protein bL27 family.

This Nitrosomonas europaea (strain ATCC 19718 / CIP 103999 / KCTC 2705 / NBRC 14298) protein is Large ribosomal subunit protein bL27.